The sequence spans 334 residues: Glycerol-3-phosphate dehydrogenase [NAD(P)+] (334 aa).

Positions 14, 15, 35, and 109 each coordinate NADPH. 3 residues coordinate sn-glycerol 3-phosphate: K109, G138, and T140. A142 is an NADPH binding site. Residues K194, D247, S257, R258, and N259 each contribute to the sn-glycerol 3-phosphate site. The Proton acceptor role is filled by K194. An NADPH-binding site is contributed by R258. The NADPH site is built by V282 and E284.

This sequence belongs to the NAD-dependent glycerol-3-phosphate dehydrogenase family.

The protein resides in the cytoplasm. The enzyme catalyses sn-glycerol 3-phosphate + NAD(+) = dihydroxyacetone phosphate + NADH + H(+). It catalyses the reaction sn-glycerol 3-phosphate + NADP(+) = dihydroxyacetone phosphate + NADPH + H(+). It functions in the pathway membrane lipid metabolism; glycerophospholipid metabolism. Functionally, catalyzes the reduction of the glycolytic intermediate dihydroxyacetone phosphate (DHAP) to sn-glycerol 3-phosphate (G3P), the key precursor for phospholipid synthesis. The chain is Glycerol-3-phosphate dehydrogenase [NAD(P)+] from Aeromonas salmonicida (strain A449).